The following is a 101-amino-acid chain: RNA-3 uncharacterized 11.6 kDa protein (101 aa).

The chain is RNA-3 uncharacterized 11.6 kDa protein from Beet necrotic yellow vein mosaic virus (isolate Yugoslavia/G1) (BNYVV).